A 167-amino-acid chain; its full sequence is Peptidyl-prolyl cis-trans isomerase-like 3 (167 aa).

A PPIase cyclophilin-type domain is found at 1-160 (MSVTLHTTLG…EEVRIERVTV (160 aa)).

The protein belongs to the cyclophilin-type PPIase family. PPIL3 subfamily.

The enzyme catalyses [protein]-peptidylproline (omega=180) = [protein]-peptidylproline (omega=0). In terms of biological role, PPIases accelerate the folding of proteins. It catalyzes the cis-trans isomerization of proline imidic peptide bonds in oligopeptides. The chain is Peptidyl-prolyl cis-trans isomerase-like 3 (cyp-10) from Neurospora crassa (strain ATCC 24698 / 74-OR23-1A / CBS 708.71 / DSM 1257 / FGSC 987).